A 189-amino-acid chain; its full sequence is Cell division protein SepF (189 aa).

The interval glutamate 18–aspartate 64 is disordered. Residues histidine 22 to lysine 35 show a composition bias toward basic and acidic residues.

The protein belongs to the SepF family. In terms of assembly, homodimer. Interacts with FtsZ.

The protein localises to the cytoplasm. Its function is as follows. Cell division protein that is part of the divisome complex and is recruited early to the Z-ring. Probably stimulates Z-ring formation, perhaps through the cross-linking of FtsZ protofilaments. Its function overlaps with FtsA. This chain is Cell division protein SepF, found in Streptococcus thermophilus (strain ATCC BAA-250 / LMG 18311).